We begin with the raw amino-acid sequence, 102 residues long: Protein GOLVEN 4 (102 aa).

Residues Met-1–Ala-27 form the signal peptide. Positions Phe-28–Arg-89 are excised as a propeptide. The tract at residues Lys-56 to Asp-78 is disordered. Residue Tyr-91 is modified to Sulfotyrosine. Pro-99 carries the hydroxyproline modification.

It belongs to the RGF family. Binds to LRR receptor-like serine/threonine-protein kinases to trigger their dimerization with SERK proteins and subsequent signaling. Expressed in roots and sepals.

Its subcellular location is the secreted. Functionally, signaling peptide (root growth factor) that promotes root hairs formation and growth. Maintains the postembryonic root stem cell niche. Regulates the pattern of root growth and lateral root development by modulating the length and the number of cortical cells in the root apical meristem (RAM), and the anticlinal asymmetric cell divisions in lateral root initiation cells. In Arabidopsis thaliana (Mouse-ear cress), this protein is Protein GOLVEN 4.